A 288-amino-acid polypeptide reads, in one-letter code: Proline iminopeptidase (288 aa).

Positions 27-274 (PVIVLHGGPG…SAHMPYIEEP (248 aa)) constitute an AB hydrolase-1 domain. The active-site Nucleophile is S101. Residue D240 is part of the active site. H267 serves as the catalytic Proton donor.

This sequence belongs to the peptidase S33 family. Monomer.

Its subcellular location is the cytoplasm. The enzyme catalyses Release of N-terminal proline from a peptide.. Completely inhibited by p-chloromercuribenzoate (PCMB) and heavy metal salts. Partially inhibited by proline and proline derivatives with proline as the amino terminus. Enzyme inactivated by PCMB is reactivated by incubation with 2-mercaptoethanol. Functionally, releases the N-terminal proline from various substrates including at least dipeptides Pro-Pro, Pro-Gln, Pro-Trp and Pro-Tyr. Also acts on amides (Pro-beta NA) and oligopeptides including Pro-Leu-GlyNH2, Pro-Leu-Gly, Pro-Phe-Gly-Lys, Pro-Pro-Ala-OBut and Pro-Pro-Gly-(Pro-Pro-Gly)(4). Higher activity toward small peptides (up to three residues), but very low activity for longer peptides. Has no activity against p-nitrophenyl acetate, poly_L-proline, Met-Pro or amino acyl amides other than Pro-betaNA (Pyr-betaNA, Phe-betaNA, Cys-betaNA, Met-betaNA, Leu-betaNA, Ala-betaNA and Z-Gly-Pro-betaNA). The polypeptide is Proline iminopeptidase (pip) (Heyndrickxia coagulans (Weizmannia coagulans)).